The sequence spans 352 residues: Probable dual-specificity RNA methyltransferase RlmN (352 aa).

Catalysis depends on Glu99, which acts as the Proton acceptor. A Radical SAM core domain is found at 105 to 325 (EGDRATLCIS…ESHGYTCTIR (221 aa)). A disulfide bridge connects residues Cys112 and Cys336. [4Fe-4S] cluster-binding residues include Cys119, Cys123, and Cys126. Residues 164-165 (GE), Ser196, 217-219 (SLH), and His293 contribute to the S-adenosyl-L-methionine site. Cys336 acts as the S-methylcysteine intermediate in catalysis.

Belongs to the radical SAM superfamily. RlmN family. The cofactor is [4Fe-4S] cluster.

Its subcellular location is the cytoplasm. The enzyme catalyses adenosine(2503) in 23S rRNA + 2 reduced [2Fe-2S]-[ferredoxin] + 2 S-adenosyl-L-methionine = 2-methyladenosine(2503) in 23S rRNA + 5'-deoxyadenosine + L-methionine + 2 oxidized [2Fe-2S]-[ferredoxin] + S-adenosyl-L-homocysteine. It carries out the reaction adenosine(37) in tRNA + 2 reduced [2Fe-2S]-[ferredoxin] + 2 S-adenosyl-L-methionine = 2-methyladenosine(37) in tRNA + 5'-deoxyadenosine + L-methionine + 2 oxidized [2Fe-2S]-[ferredoxin] + S-adenosyl-L-homocysteine. Specifically methylates position 2 of adenine 2503 in 23S rRNA and position 2 of adenine 37 in tRNAs. This chain is Probable dual-specificity RNA methyltransferase RlmN, found in Porphyromonas gingivalis (strain ATCC 33277 / DSM 20709 / CIP 103683 / JCM 12257 / NCTC 11834 / 2561).